A 608-amino-acid chain; its full sequence is Aspartate--tRNA(Asp/Asn) ligase (608 aa).

Residue glutamate 179 coordinates L-aspartate. The aspartate stretch occupies residues 203–206 (QLFK). Arginine 225 is a binding site for L-aspartate. Residues 225 to 227 (RDE) and glutamine 234 contribute to the ATP site. Histidine 461 provides a ligand contact to L-aspartate. Glutamate 494 lines the ATP pocket. Arginine 501 contributes to the L-aspartate binding site. 546-549 (GLDR) is an ATP binding site.

It belongs to the class-II aminoacyl-tRNA synthetase family. Type 1 subfamily. In terms of assembly, homodimer.

Its subcellular location is the cytoplasm. It catalyses the reaction tRNA(Asx) + L-aspartate + ATP = L-aspartyl-tRNA(Asx) + AMP + diphosphate. Functionally, aspartyl-tRNA synthetase with relaxed tRNA specificity since it is able to aspartylate not only its cognate tRNA(Asp) but also tRNA(Asn). Reaction proceeds in two steps: L-aspartate is first activated by ATP to form Asp-AMP and then transferred to the acceptor end of tRNA(Asp/Asn). This chain is Aspartate--tRNA(Asp/Asn) ligase, found in Psychrobacter arcticus (strain DSM 17307 / VKM B-2377 / 273-4).